The sequence spans 292 residues: Undecaprenyl-diphosphatase (292 aa).

7 consecutive transmembrane segments (helical) span residues 1–21 (MSLV…FLPV), 46–66 (FVTI…RADI), 88–108 (ARLG…GKLL), 114–134 (ALGN…LLAA), 192–212 (FLLS…STVP), 225–245 (VVGT…LLAW), and 253–273 (VFVV…LSGV).

This sequence belongs to the UppP family.

It localises to the cell inner membrane. It catalyses the reaction di-trans,octa-cis-undecaprenyl diphosphate + H2O = di-trans,octa-cis-undecaprenyl phosphate + phosphate + H(+). Catalyzes the dephosphorylation of undecaprenyl diphosphate (UPP). Confers resistance to bacitracin. This chain is Undecaprenyl-diphosphatase, found in Anaeromyxobacter dehalogenans (strain 2CP-C).